The sequence spans 528 residues: Probable methylmalonate-semialdehyde/malonate-semialdehyde dehydrogenase [acylating], mitochondrial (528 aa).

The N-terminal 26 residues, 1–26, are a transit peptide targeting the mitochondrion; sequence MLSFKFAKSASKVIGNRNFHSSSASL. NAD(+) is bound by residues F175, K199, E202, and R203. C307 (nucleophile) is an active-site residue. An NAD(+)-binding site is contributed by E408.

It belongs to the aldehyde dehydrogenase family. Homotetramer.

It is found in the mitochondrion. The enzyme catalyses 2-methyl-3-oxopropanoate + NAD(+) + CoA + H2O = propanoyl-CoA + hydrogencarbonate + NADH + H(+). It catalyses the reaction 3-oxopropanoate + NAD(+) + CoA + H2O = hydrogencarbonate + acetyl-CoA + NADH + H(+). In terms of biological role, probable malonate and methylmalonate semialdehyde dehydrogenase involved in the catabolism of valine, thymine, and compounds catabolized by way of beta-alanine, including uracil and cytidine. This is Probable methylmalonate-semialdehyde/malonate-semialdehyde dehydrogenase [acylating], mitochondrial (mmsdh) from Dictyostelium discoideum (Social amoeba).